Reading from the N-terminus, the 444-residue chain is uncharacterized protein (444 aa).

This is an uncharacterized protein from Saccharomyces cerevisiae (strain ATCC 204508 / S288c) (Baker's yeast).